A 147-amino-acid chain; its full sequence is Large ribosomal subunit protein uL13 (147 aa).

The protein belongs to the universal ribosomal protein uL13 family. As to quaternary structure, part of the 50S ribosomal subunit.

In terms of biological role, this protein is one of the early assembly proteins of the 50S ribosomal subunit, although it is not seen to bind rRNA by itself. It is important during the early stages of 50S assembly. In Frankia casuarinae (strain DSM 45818 / CECT 9043 / HFP020203 / CcI3), this protein is Large ribosomal subunit protein uL13.